The following is a 203-amino-acid chain: High frequency lysogenization protein HflD homolog (203 aa).

The protein belongs to the HflD family.

It localises to the cytoplasm. The protein resides in the cell inner membrane. The sequence is that of High frequency lysogenization protein HflD homolog from Dichelobacter nodosus (strain VCS1703A).